The chain runs to 129 residues: Large ribosomal subunit protein bL20 (129 aa).

Residues 1–17 are compositionally biased toward basic residues; the sequence is MARVKRSVNAHKKRRSV. A disordered region spans residues 1-29; the sequence is MARVKRSVNAHKKRRSVLKASKGYRGQRS.

This sequence belongs to the bacterial ribosomal protein bL20 family.

Binds directly to 23S ribosomal RNA and is necessary for the in vitro assembly process of the 50S ribosomal subunit. It is not involved in the protein synthesizing functions of that subunit. The protein is Large ribosomal subunit protein bL20 of Mycobacterium ulcerans (strain Agy99).